Consider the following 513-residue polypeptide: General transcription and DNA repair factor IIH subunit TFB2 (513 aa).

Positions 296 to 319 are disordered; sequence LRQNREEPSVNEDGANGKSTTDIT.

This sequence belongs to the TFB2 family. Component of the 7-subunit TFIIH core complex composed of XPB/SSL2, XPD/RAD3, SSL1, TFB1, TFB2, TFB4 and TFB5, which is active in NER. The core complex associates with the 3-subunit CTD-kinase module TFIIK composed of CCL1, KIN28 and TFB3 to form the 10-subunit holoenzyme (holo-TFIIH) active in transcription. An additionnal subunit, TFB6, plays a role in the dissociation of the SSL2 helicase from TFIIH after transcription initiation. Interacts with TFB5.

It localises to the nucleus. Its function is as follows. Component of the general transcription and DNA repair factor IIH (TFIIH) core complex, which is involved in general and transcription-coupled nucleotide excision repair (NER) of damaged DNA and, when complexed to TFIIK, in RNA transcription by RNA polymerase II. In NER, TFIIH acts by opening DNA around the lesion to allow the excision of the damaged oligonucleotide and its replacement by a new DNA fragment. In transcription, TFIIH has an essential role in transcription initiation. When the pre-initiation complex (PIC) has been established, TFIIH is required for promoter opening and promoter escape. Phosphorylation of the C-terminal tail (CTD) of the largest subunit of RNA polymerase II by the kinase module TFIIK controls the initiation of transcription. This chain is General transcription and DNA repair factor IIH subunit TFB2 (TFB2), found in Saccharomyces cerevisiae (strain ATCC 204508 / S288c) (Baker's yeast).